The primary structure comprises 362 residues: MRTAVIIGTGMIGTSIGLALRKQGVDSYLMDTSPVALRIAEAVGAGTAEEPPETVDLAVVAVPPVHVAPVIASHQSRGTARFYVDVAGVKVSTRRELDALGCDLATVVGGHPLVGRPGSGPLAARGDLFDGRPWALVPAVGTDAAALNRALELVAACGAIPVVLDAEAHDRAIALGTLVPQIALTLVAARLTEADSGALRLLGSVWSEIPQLVGVDSATSWTQVLAANAAPVVGELEKLSRDLASLLETLRGVADGDGSLAEPDGRLLEFIQRGIDGSNRVPGRYGIPTETALADVDVSVDDRPAELARLFDDVAGAGVVMRGIDISQRPDSPDRTVTISVTPRDAENLLHELRRRKWPANS.

In terms of domain architecture, Prephenate/arogenate dehydrogenase spans 2 to 283; the sequence is RTAVIIGTGM…GIDGSNRVPG (282 aa).

The protein belongs to the prephenate/arogenate dehydrogenase family.

It carries out the reaction prephenate + NAD(+) = 3-(4-hydroxyphenyl)pyruvate + CO2 + NADH. It participates in antibiotic biosynthesis; novobiocin biosynthesis. Its function is as follows. Probable prephenate dehydrogenase that produces 4-hydroxyphenylpyruvate (4HPP) in the novobiocin biosynthesis pathway. Novobiocin is an aminocoumarin family antibiotic that targets bacterial DNA gyrases. The protein is Probable prephenate dehydrogenase NovF (novF) of Streptomyces niveus (Streptomyces spheroides).